We begin with the raw amino-acid sequence, 173 residues long: Development-specific protein S (173 aa).

Beta/gamma crystallin 'Greek key' domains are found at residues 2-46 and 48-86; these read ANIT…KVPP and VKAI…RVIS. Ca(2+) contacts are provided by Y8, N37, T38, S40, Q54, N77, N78, and S80. The segment at 87–90 is connecting peptide; it reads VPVQ. 2 Beta/gamma crystallin 'Greek key' domains span residues 91-135 and 136-173; these read PRAR…KPQG and LAVV…IRIS.

This sequence belongs to the beta/gamma-crystallin family.

In terms of biological role, protein S, induced in large amounts during fruiting body formation, assembles on the surface of myxospores in the presence of calcium ions. This chain is Development-specific protein S (tps), found in Myxococcus xanthus.